Consider the following 114-residue polypeptide: C-X-C motif chemokine 5 (114 aa).

The N-terminal stretch at 1–36 (MSLLSSRAARVPGPSSSLCALLVLLLLLTQPGPIAS) is a signal peptide. 2 disulfide bridges follow: Cys-49/Cys-75 and Cys-51/Cys-91.

It belongs to the intercrine alpha (chemokine CxC) family. As to quaternary structure, monomer. Homodimer. In terms of processing, N-terminal processed forms ENA-78(8-78) and ENA-78(9-78) are produced by proteolytic cleavage after secretion from peripheral blood monocytes.

Its subcellular location is the secreted. In terms of biological role, involved in neutrophil activation. In vitro, ENA-78(8-78) and ENA-78(9-78) show a threefold higher chemotactic activity for neutrophil granulocytes. The protein is C-X-C motif chemokine 5 (CXCL5) of Homo sapiens (Human).